The chain runs to 479 residues: V-type ATP synthase beta chain (479 aa).

The segment at 458–479 (EGDSEREAPKMDSPHEEISEKS) is disordered.

This sequence belongs to the ATPase alpha/beta chains family.

Produces ATP from ADP in the presence of a proton gradient across the membrane. The V-type beta chain is a regulatory subunit. The chain is V-type ATP synthase beta chain from Nitrosococcus oceani (strain ATCC 19707 / BCRC 17464 / JCM 30415 / NCIMB 11848 / C-107).